The following is a 302-amino-acid chain: MGGKMEKITCVGHTALDYIFNVEKFPEPNTSIQIPSARKYYGGAAANTAVGIKKLGVNSELLSCVGYDFKNSGYERYLKNLDINISKLYYSEEEETPKAWIFTDKDNNQITFFLWGAAKHYKELNPPNFNTEIVHIATGDPEFNLKCAKKAYGNNLVSFDPGQDLPQYSKEMLLEIIEHTNFLFMNKHEFERASNLLNFEIDDYLERVDALIVTKGSKGSVIYTKDKKIEIPCIKAGKVIDPTGAGDSYRAGFLSAYVKGYDLEKCGLIGAATASFVVEAKGCQTNLPTWDKVVERLEKHRI.

D17, Q33, G43, and N47 together coordinate substrate. ATP is bound at residue Q109. Residues 111–113 and Q163 each bind substrate; that span reads TFF. Residues N186 and 214 to 219 contribute to the ATP site; that span reads TKGSKG. D247 contributes to the substrate binding site. The Proton acceptor role is filled by D247.

As to quaternary structure, homodimer. It depends on Mg(2+) as a cofactor. Mn(2+) is required as a cofactor.

The catalysed reaction is cytidine + ATP = CMP + ADP + H(+). It carries out the reaction guanosine + ATP = GMP + ADP + H(+). The enzyme catalyses inosine + ATP = IMP + ADP + H(+). In terms of biological role, catalyzes the phosphorylation of a wide range of nucleosides to yield nucleoside monophosphates. Shows the highest activity for inosine, guanosine and cytidine, but very poor kinase activity with adenosine, thymidine, uridine and xanthosine. ATP is the best phosphate donor, but can also use ITP and GTP. Shows extremely low activity with fructose-6-phosphate. In Methanocaldococcus jannaschii (strain ATCC 43067 / DSM 2661 / JAL-1 / JCM 10045 / NBRC 100440) (Methanococcus jannaschii), this protein is Nucleoside kinase.